We begin with the raw amino-acid sequence, 450 residues long: MIKKLLIANRGEIAVRIIRACRELGIETVAVYSEADKDALHVQMADEAFCIGPKASKDSYLNVTNIVSVAKLTGTDAIHPGYGFLAENADFAELCEEVNVTFVGPSADAISKMGTKDVARETMKQAGVPIVPGSQGIIENVEEAVSLANEIGYPVIIKATAGGGGKGIRVARTEEELINGIKITQQEAATAFGNPGVYIEKYIEDFRHVEIQVLADNYGNTIHLGERDCSIQRRLQKLLEESPSPALDSEIREQMGDAAVKAAKAVGYTGAGTVEFIYDYNEQRYYFMEMNTRIQVEHPVTEMVTGTDLIKEQIKVASGMELSLKQEDVEFEGWAIECRINAENPSKNFMPSPGEIKMYLPPGGLGVRVDSAAYPGYSIPPYYDSMIAKVITYGKTRDEAIARMKRALSEFVIEGIETTIPFHLKLLEHETFVSGEFNTKFLETYDVMGS.

A Biotin carboxylation domain is found at 1 to 447; it reads MIKKLLIANR…NTKFLETYDV (447 aa). Residues Lys-116, Lys-158, 164–165, 200–203, and His-208 contribute to the ATP site; these read GG and EKYI. Positions 120–318 constitute an ATP-grasp domain; the sequence is RETMKQAGVP…LIKEQIKVAS (199 aa). Lys-237 provides a ligand contact to hydrogencarbonate. Residues Glu-275 and Glu-289 each contribute to the ATP site. The Mg(2+) site is built by Glu-275, Glu-289, and Asn-291. 3 residues coordinate Mn(2+): Glu-275, Glu-289, and Asn-291. Hydrogencarbonate is bound by residues Arg-293, Val-296, and Arg-339. Arg-293 is a catalytic residue. Arg-339 lines the biotin pocket.

As to quaternary structure, acetyl-CoA carboxylase is a heterohexamer of biotin carboxyl carrier protein, biotin carboxylase and the two subunits of carboxyl transferase in a 2:2 complex. It depends on Mg(2+) as a cofactor. Requires Mn(2+) as cofactor.

The catalysed reaction is N(6)-biotinyl-L-lysyl-[protein] + hydrogencarbonate + ATP = N(6)-carboxybiotinyl-L-lysyl-[protein] + ADP + phosphate + H(+). It participates in lipid metabolism; malonyl-CoA biosynthesis; malonyl-CoA from acetyl-CoA: step 1/1. This protein is a component of the acetyl coenzyme A carboxylase complex; first, biotin carboxylase catalyzes the carboxylation of the carrier protein and then the transcarboxylase transfers the carboxyl group to form malonyl-CoA. This chain is Biotin carboxylase 1 (accC1), found in Bacillus subtilis (strain 168).